Reading from the N-terminus, the 125-residue chain is Holo-[acyl-carrier-protein] synthase (125 aa).

Positions 8 and 57 each coordinate Mg(2+).

Belongs to the P-Pant transferase superfamily. AcpS family. Mg(2+) is required as a cofactor.

It localises to the cytoplasm. The enzyme catalyses apo-[ACP] + CoA = holo-[ACP] + adenosine 3',5'-bisphosphate + H(+). Its function is as follows. Transfers the 4'-phosphopantetheine moiety from coenzyme A to a Ser of acyl-carrier-protein. This Solibacter usitatus (strain Ellin6076) protein is Holo-[acyl-carrier-protein] synthase.